The sequence spans 503 residues: Na(+)-translocating NADH-quinone reductase subunit B (503 aa).

5 helical membrane passes run 55 to 75 (MMLV…NSGV), 94 to 114 (ISGF…FSIL), 120 to 140 (IFLP…VLFA), 161 to 181 (TLPP…GVVV), and 186 to 206 (FGGT…FLFF). FMN phosphoryl threonine is present on Thr248. A run of 5 helical transmembrane segments spans residues 361–381 (TSTF…IASW), 387–407 (FGIG…LIVG), 417–437 (FFIP…LVFM), 452–472 (WIYG…NPAY), and 475–495 (GVML…YFAV).

The protein belongs to the NqrB/RnfD family. In terms of assembly, composed of six subunits; NqrA, NqrB, NqrC, NqrD, NqrE and NqrF. Requires FMN as cofactor.

The protein resides in the cell inner membrane. The enzyme catalyses a ubiquinone + n Na(+)(in) + NADH + H(+) = a ubiquinol + n Na(+)(out) + NAD(+). Its function is as follows. NQR complex catalyzes the reduction of ubiquinone-1 to ubiquinol by two successive reactions, coupled with the transport of Na(+) ions from the cytoplasm to the periplasm. NqrA to NqrE are probably involved in the second step, the conversion of ubisemiquinone to ubiquinol. The protein is Na(+)-translocating NADH-quinone reductase subunit B of Chlamydia caviae (strain ATCC VR-813 / DSM 19441 / 03DC25 / GPIC) (Chlamydophila caviae).